Reading from the N-terminus, the 225-residue chain is Isoprenyl transferase 1 (225 aa).

Residue Asp3 is part of the active site. Asp3 is a Mg(2+) binding site. Residues Gly4–Arg7, Trp8, His21, and Ser49–Glu51 contribute to the substrate site. Asn52 (proton acceptor) is an active-site residue. Residues Arg55, Arg174, and Arg180–Ser182 each bind substrate. Mg(2+) is bound at residue Glu193.

This sequence belongs to the UPP synthase family. As to quaternary structure, homodimer. It depends on Mg(2+) as a cofactor.

Its function is as follows. Catalyzes the condensation of isopentenyl diphosphate (IPP) with allylic pyrophosphates generating different type of terpenoids. The polypeptide is Isoprenyl transferase 1 (Corynebacterium glutamicum (strain ATCC 13032 / DSM 20300 / JCM 1318 / BCRC 11384 / CCUG 27702 / LMG 3730 / NBRC 12168 / NCIMB 10025 / NRRL B-2784 / 534)).